The sequence spans 288 residues: MSLSNFNLQSKVLLHPLVLFQIIDAYERRAKDVPEVLGTLLGIVAGKTGRIEITNCFSVVHRMHGDNNCHIDLDLKYDNDMLELAQIAYPQEKVVGWFSTGKAVSAAAVELHEYYERQCHSGQPLHLLMDTSLRGQRMNTRIFCAVATGVPGGTKGLMFSLLPMDIYFGSPDIVAMRHMGRQCALPPKEAGRLLPELEQVVDATKDIQQKLDLVLRYINDILNRKRRPDNTVGRALHDVLTSVPMVEAERFRHMFNTNMRDLLMSLTLSSMIKVQLQLSERLSNMVDA.

The region spanning 12 to 149 is the MPN domain; sequence VLLHPLVLFQ…TRIFCAVATG (138 aa).

Belongs to the eIF-3 subunit F family. As to quaternary structure, component of the eukaryotic translation initiation factor 3 (eIF-3) complex. The eIF-3 complex interacts with pix.

It localises to the cytoplasm. Its function is as follows. Component of the eukaryotic translation initiation factor 3 (eIF-3) complex, which is involved in protein synthesis of a specialized repertoire of mRNAs and, together with other initiation factors, stimulates binding of mRNA and methionyl-tRNAi to the 40S ribosome. The eIF-3 complex specifically targets and initiates translation of a subset of mRNAs involved in cell proliferation. The chain is Eukaryotic translation initiation factor 3 subunit F-2 from Drosophila persimilis (Fruit fly).